The following is a 367-amino-acid chain: Dye-decolorizing peroxidase (367 aa).

D152 functions as the Proton acceptor in the catalytic mechanism. H225 provides a ligand contact to heme. Residues 311–367 (DPDGELAAAEPSDAQNDDPASASARIEETDPPNPASADDPAPADDSLGIGSLRRRDQ) are disordered. The segment covering 345–356 (ASADDPAPADDS) has biased composition (low complexity). The interval 358–365 (GIGSLRRR) is targeting peptide.

This sequence belongs to the DyP-type peroxidase family. In terms of assembly, homohexamer. It depends on heme b as a cofactor.

The protein localises to the encapsulin nanocompartment. Its function is as follows. Cargo protein of a type 1 encapsulin nanocompartment. Has both general peroxidase activity and dye-decolorizing activity. Can catalyze the oxidation of both protoporphyrinogen IX and coproporphyrinogen III to their corresponding porphyrins. Also efficiently decolorizes the dyes alizarin red and Cibacron blue F3GA. This cargo-loaded encapsulin nanocompartment is probably involved in protection against oxidative damage. This is Dye-decolorizing peroxidase from Brevibacterium linens.